The sequence spans 311 residues: Malate dehydrogenase (311 aa).

NAD(+) contacts are provided by residues 7-13 (GAAGGIG) and Asp-34. Substrate is bound by residues Arg-81 and Arg-87. Residues Asn-94 and 117–119 (ITN) each bind NAD(+). Substrate is bound by residues Asn-119 and Arg-153. The active-site Proton acceptor is His-177. An NAD(+)-binding site is contributed by Met-227.

This sequence belongs to the LDH/MDH superfamily. MDH type 1 family. As to quaternary structure, homodimer.

It catalyses the reaction (S)-malate + NAD(+) = oxaloacetate + NADH + H(+). Catalyzes the reversible oxidation of malate to oxaloacetate. The protein is Malate dehydrogenase of Shewanella piezotolerans (strain WP3 / JCM 13877).